Reading from the N-terminus, the 484-residue chain is Acetyl-coenzyme A carboxylase carboxyl transferase subunit beta, chloroplastic (484 aa).

Residues L223–N484 form the CoA carboxyltransferase N-terminal domain. Zn(2+) contacts are provided by C227, C230, C243, and C246. The C4-type zinc finger occupies C227–C246.

This sequence belongs to the AccD/PCCB family. In terms of assembly, acetyl-CoA carboxylase is a heterohexamer composed of biotin carboxyl carrier protein, biotin carboxylase and 2 subunits each of ACCase subunit alpha and ACCase plastid-coded subunit beta (accD). It depends on Zn(2+) as a cofactor.

It is found in the plastid. The protein localises to the chloroplast stroma. It catalyses the reaction N(6)-carboxybiotinyl-L-lysyl-[protein] + acetyl-CoA = N(6)-biotinyl-L-lysyl-[protein] + malonyl-CoA. It participates in lipid metabolism; malonyl-CoA biosynthesis; malonyl-CoA from acetyl-CoA: step 1/1. In terms of biological role, component of the acetyl coenzyme A carboxylase (ACC) complex. Biotin carboxylase (BC) catalyzes the carboxylation of biotin on its carrier protein (BCCP) and then the CO(2) group is transferred by the transcarboxylase to acetyl-CoA to form malonyl-CoA. This is Acetyl-coenzyme A carboxylase carboxyl transferase subunit beta, chloroplastic from Capsella bursa-pastoris (Shepherd's purse).